A 370-amino-acid chain; its full sequence is E3 ubiquitin-protein ligase E3D (370 aa).

A2 is subject to N-acetylalanine. Residues 129–159 carry the BRAT1-like motif motif; sequence PLPSENWSALVGEWCCHPDPFANKPLHPREN. C144 contacts Zn(2+). Residues 214 to 236 form an interaction with UBE2C region; it reads QPSEGSFPNIPRSQFVQSVIARC. The segment at 332–368 is HECT-like; that stretch reads LPSTTCLELLLILSRNNASLPLSLRQMNSFQLWCSHC.

Interacts with UBE2C/UbcH10 (E2 ubiquitin-conjugating enzyme). In vitro, interacts with cyclin-B. Ubiquitinated by UBCH10 (E2 ubiquitin-conjugating enzyme).

The protein resides in the cytoplasm. The enzyme catalyses S-ubiquitinyl-[E2 ubiquitin-conjugating enzyme]-L-cysteine + [acceptor protein]-L-lysine = [E2 ubiquitin-conjugating enzyme]-L-cysteine + N(6)-ubiquitinyl-[acceptor protein]-L-lysine.. The protein operates within protein modification; protein ubiquitination. In terms of biological role, E3 ubiquitin-protein ligase which accepts ubiquitin from specific E2 ubiquitin-conjugating enzymes, and transfers it to substrates, generally promoting their degradation by the proteasome. Independently of its E3 ubiquitin-protein ligase activity, acts as an inhibitor of CPSF3 endonuclease activity by blocking CPSF3 active site. The chain is E3 ubiquitin-protein ligase E3D (Ube3d) from Rattus norvegicus (Rat).